The following is a 522-amino-acid chain: Probable poly(ADP-ribose) glycohydrolase 2 (522 aa).

This sequence belongs to the poly(ADP-ribose) glycohydrolase family.

The catalysed reaction is [(1''-&gt;2')-ADP-alpha-D-ribose](n) + H2O = [(1''-&gt;2')-ADP-alpha-D-ribose](n-1) + ADP-D-ribose. In terms of biological role, poly(ADP-ribose) synthesized after DNA damage is only present transiently and is rapidly degraded by poly(ADP-ribose) glycohydrolase. This chain is Probable poly(ADP-ribose) glycohydrolase 2 (PARG2), found in Arabidopsis thaliana (Mouse-ear cress).